The chain runs to 228 residues: Ribosomal RNA small subunit methyltransferase G (228 aa).

S-adenosyl-L-methionine-binding positions include glycine 70, 121-122, and arginine 138; that span reads AE.

The protein belongs to the methyltransferase superfamily. RNA methyltransferase RsmG family.

Its subcellular location is the cytoplasm. Its function is as follows. Specifically methylates the N7 position of a guanine in 16S rRNA. The chain is Ribosomal RNA small subunit methyltransferase G from Thermotoga sp. (strain RQ2).